Reading from the N-terminus, the 862-residue chain is Rab GTPase-binding effector protein 1 (862 aa).

Alanine 2 carries the N-acetylalanine modification. The stretch at 11-345 forms a coiled coil; it reads DVSLQQRVAE…KKTDTEEEVK (335 aa). Lysine 282 is modified (N6-acetyllysine). Positions 315–374 are disordered; the sequence is ELKKKDQEEDEQQRVNKRKDNKKTDTEEEVKIPVVCALTQEESSTPLSNEEEHLDSTHGS. A compositionally biased stretch (basic and acidic residues) spans 336-345; sequence KKTDTEEEVK. Phosphoserine occurs at positions 374, 377, and 407. Position 408 is a phosphothreonine (threonine 408). Serine 410 bears the Phosphoserine mark. The stretch at 534 to 816 forms a coiled coil; that stretch reads DMCSNYEKQL…LQTELDVSEQ (283 aa).

This sequence belongs to the rabaptin family. Heterodimer with RABGEF1. The heterodimer binds RAB4A and RAB5A that have been activated by GTP-binding. Interacts with TSC2. Interacts with GGA1 (via GAE domain), GGA2 (via GAE domain) and GGA3 (via GAE domain). Interacts with AP1G1 (via GAE domain). Interacts with AP1G2 (via GAE domain). Interacts with ECPAS. Interacts with KCNH1. Interacts with PKD1 (via C-terminal domain) and GGA1; the interactions recruit PKD1:PKD2 complex to GGA1 and ARL3 at trans-Golgi network. Interacts with KCNH1. Post-translationally, proteolytic cleavage by caspases in apoptotic cells causes loss of endosome fusion activity.

It is found in the cytoplasm. The protein localises to the early endosome. It localises to the recycling endosome. The protein resides in the cytoplasmic vesicle. Functionally, rab effector protein acting as linker between gamma-adaptin, RAB4A and RAB5A. Involved in endocytic membrane fusion and membrane trafficking of recycling endosomes. Involved in KCNH1 channels trafficking to and from the cell membrane. Stimulates RABGEF1 mediated nucleotide exchange on RAB5A. Mediates the traffic of PKD1:PKD2 complex from the endoplasmic reticulum through the Golgi to the cilium. The sequence is that of Rab GTPase-binding effector protein 1 (Rabep1) from Mus musculus (Mouse).